A 62-amino-acid chain; its full sequence is Sperm histone P2a (62 aa).

Belongs to the protamine P2 family. Proteolytic processing into mature chains is required for histone eviction during spermatogenesis. Transition proteins (TNP1 and TNP2) are required for processing. Testis.

It is found in the nucleus. Its subcellular location is the chromosome. Protamines substitute for histones in the chromatin of sperm during the haploid phase of spermatogenesis. They compact sperm DNA into a highly condensed, stable and inactive complex. The sequence is that of Sperm histone P2a from Equus caballus (Horse).